A 208-amino-acid polypeptide reads, in one-letter code: Small ribosomal subunit protein uS4 (208 aa).

The 63-residue stretch at 98 to 160 (RRIDNTVYRL…SRQLQMINEA (63 aa)) folds into the S4 RNA-binding domain.

Belongs to the universal ribosomal protein uS4 family. Part of the 30S ribosomal subunit. Contacts protein S5. The interaction surface between S4 and S5 is involved in control of translational fidelity.

Functionally, one of the primary rRNA binding proteins, it binds directly to 16S rRNA where it nucleates assembly of the body of the 30S subunit. With S5 and S12 plays an important role in translational accuracy. In Syntrophobacter fumaroxidans (strain DSM 10017 / MPOB), this protein is Small ribosomal subunit protein uS4.